A 434-amino-acid polypeptide reads, in one-letter code: UDP-glucose 6-dehydrogenase (434 aa).

NAD(+)-binding positions include 2–19 (NITFIGSGYVGLVSGIIM), Val-11, Asp-30, Lys-35, Thr-121, and Glu-152. Residues 148–152 (EFLRE), Lys-204, Asn-208, 249–253 (FLNAG), and Gly-257 contribute to the substrate site. Cys-260 functions as the Nucleophile in the catalytic mechanism. Position 263 (Lys-263) interacts with NAD(+). Lys-321 contacts substrate. Arg-328 is a binding site for NAD(+).

This sequence belongs to the UDP-glucose/GDP-mannose dehydrogenase family.

The enzyme catalyses UDP-alpha-D-glucose + 2 NAD(+) + H2O = UDP-alpha-D-glucuronate + 2 NADH + 3 H(+). It participates in nucleotide-sugar biosynthesis; UDP-alpha-D-glucuronate biosynthesis; UDP-alpha-D-glucuronate from UDP-alpha-D-glucose: step 1/1. The sequence is that of UDP-glucose 6-dehydrogenase (udg) from Rickettsia prowazekii (strain Madrid E).